The sequence spans 333 residues: 4-hydroxythreonine-4-phosphate dehydrogenase (333 aa).

Substrate contacts are provided by histidine 136 and threonine 137. Residues histidine 166, histidine 211, and histidine 266 each contribute to the a divalent metal cation site. The substrate site is built by lysine 274, asparagine 283, and arginine 292.

It belongs to the PdxA family. Homodimer. Requires Zn(2+) as cofactor. It depends on Mg(2+) as a cofactor. Co(2+) is required as a cofactor.

The protein localises to the cytoplasm. It carries out the reaction 4-(phosphooxy)-L-threonine + NAD(+) = 3-amino-2-oxopropyl phosphate + CO2 + NADH. Its pathway is cofactor biosynthesis; pyridoxine 5'-phosphate biosynthesis; pyridoxine 5'-phosphate from D-erythrose 4-phosphate: step 4/5. Catalyzes the NAD(P)-dependent oxidation of 4-(phosphooxy)-L-threonine (HTP) into 2-amino-3-oxo-4-(phosphooxy)butyric acid which spontaneously decarboxylates to form 3-amino-2-oxopropyl phosphate (AHAP). This chain is 4-hydroxythreonine-4-phosphate dehydrogenase, found in Acidithiobacillus ferrooxidans (strain ATCC 23270 / DSM 14882 / CIP 104768 / NCIMB 8455) (Ferrobacillus ferrooxidans (strain ATCC 23270)).